A 522-amino-acid chain; its full sequence is Involucrin (522 aa).

A compositionally biased stretch (polar residues) spans 1–15 (MSQQHTLPVTLSPAL). Disordered regions lie at residues 1–126 (MSQQ…LEEE), 159–329 (QEGQ…LVQQ), and 366–496 (QEGQ…QPVL). The segment covering 76–91 (EQQQQEPQEQELQQQH) has biased composition (low complexity). Basic and acidic residues predominate over residues 92–126 (WEQHEEHQKAENPEQQLKQEKAQRDQQLNEHLEEE). Residues 169 to 181 (QEGQLELPEQQEG) show a composition bias toward low complexity. Basic and acidic residues-rich tracts occupy residues 182-198 (QLEHLEQQEGQLKHLDQ), 214-231 (KHLEQQEGQLKHLEHQKG), 252-264 (QLKHLDQQEKQPE), 274-290 (KHLEQQEGQLEHMEHQE), and 305-323 (QLEEQEGQPKHLEEEEGQL). The segment covering 375–389 (QQQGQLEVSEQQVGQ) has biased composition (low complexity). Basic and acidic residues-rich tracts occupy residues 391 to 401 (KHLEQEGKQLE), 409 to 418 (QLKHLEKQEA), and 431 to 465 (KHPEQQEKQLEHPEQQEGQLKHLEQQEGQLKDLEQ). Positions 466-479 (QKGQLEQQQGQLEQ) are enriched in low complexity.

It belongs to the involucrin family. In terms of assembly, directly or indirectly cross-linked to cornifelin (CNFN). Post-translationally, substrate of transglutaminase. Specific glutamines or lysines are cross-linked to keratins, desmoplakin and to inter involucrin molecules. As to expression, keratinocytes of epidermis and other stratified squamous epithelia.

The protein localises to the cytoplasm. Its function is as follows. Part of the insoluble cornified cell envelope (CE) of stratified squamous epithelia. This chain is Involucrin (IVL), found in Hylobates lar (Lar gibbon).